Reading from the N-terminus, the 206-residue chain is Ribosomal RNA large subunit methyltransferase E (206 aa).

Residues G60, W62, D80, D96, and D121 each contribute to the S-adenosyl-L-methionine site. The active-site Proton acceptor is K161.

The protein belongs to the class I-like SAM-binding methyltransferase superfamily. RNA methyltransferase RlmE family.

It is found in the cytoplasm. The catalysed reaction is uridine(2552) in 23S rRNA + S-adenosyl-L-methionine = 2'-O-methyluridine(2552) in 23S rRNA + S-adenosyl-L-homocysteine + H(+). Its function is as follows. Specifically methylates the uridine in position 2552 of 23S rRNA at the 2'-O position of the ribose in the fully assembled 50S ribosomal subunit. This chain is Ribosomal RNA large subunit methyltransferase E, found in Nitrosomonas europaea (strain ATCC 19718 / CIP 103999 / KCTC 2705 / NBRC 14298).